Reading from the N-terminus, the 305-residue chain is Glycine--tRNA ligase alpha subunit (305 aa).

It belongs to the class-II aminoacyl-tRNA synthetase family. Tetramer of two alpha and two beta subunits.

The protein resides in the cytoplasm. It carries out the reaction tRNA(Gly) + glycine + ATP = glycyl-tRNA(Gly) + AMP + diphosphate. In Streptococcus pyogenes serotype M2 (strain MGAS10270), this protein is Glycine--tRNA ligase alpha subunit.